The primary structure comprises 275 residues: Putative Ig-like V-type domain-containing protein FPV055 (275 aa).

Ig-like V-type domains are found at residues 25 to 122 and 140 to 239; these read KTFV…MNLG and PRRS…KSLS.

In Fowlpox virus (strain NVSL) (FPV), this protein is Putative Ig-like V-type domain-containing protein FPV055.